Here is a 581-residue protein sequence, read N- to C-terminus: Prolactin receptor (581 aa).

The N-terminal stretch at 1–24 is a signal peptide; sequence MKENAASRVLFILLLFLFASLLNG. The Extracellular portion of the chain corresponds to 25–237; sequence QSPPEKPKLI…NDFPVKDTSM (213 aa). 2 Fibronectin type-III domains span residues 27-127 and 129-229; these read PPEK…IVEP and PPVN…IPND. A disulfide bond links Cys-36 and Cys-46. Asn-59 is a glycosylation site (N-linked (GlcNAc...) asparagine). Cysteines 75 and 86 form a disulfide. Asn-132 carries an N-linked (GlcNAc...) asparagine glycan. The Zn(2+) site is built by Asp-211 and His-212. The short motif at 215 to 219 is the WSXWS motif element; the sequence is WSEWS. Residues 238–258 traverse the membrane as a helical segment; sequence WIFVGVLSAVICLIMVWAVAL. The Cytoplasmic portion of the chain corresponds to 259–581; the sequence is KGYSMVTCIL…SAKKAPPALP (323 aa). Positions 267-275 match the Box 1 motif motif; sequence ILPPVPGPK. 2 stretches are compositionally biased toward basic and acidic residues: residues 323 to 349 and 375 to 388; these read QHLMPHPSKEHMEQGVKPMHLDPDTDS and HIPEGPEKLEDPET. Disordered regions lie at residues 323 to 388 and 462 to 492; these read QHLM…DPET and FKPSKTIETGGEGKAAKQSESEGYSSEPDQD.

It belongs to the type I cytokine receptor family. Type 1 subfamily. As to quaternary structure, interacts with SMARCA1. Interacts with NEK3 and VAV2 and this interaction is prolactin-dependent. Expressed in all tissues examined; liver, pituitary, adrenal gland, ovary and fetal liver.

Its subcellular location is the membrane. In terms of biological role, this is a receptor for the anterior pituitary hormone prolactin. This is Prolactin receptor (PRLR) from Ovis aries (Sheep).